The sequence spans 304 residues: MRLPIILDTDPGIDDAAAIAAALFAPELELQLMTTVAGNVSVEKTTRNALQLLHFWNADVPLAQGASMPLVRPLRDAASVHGESGMEGYDFVEHQRQPLAKPAFQAIRDALMHAAEPITLVAIGPLTNIALLLTQYPECVFNIRRLVIMGGSAGRGNFTPNAEFNIAIDPEAAAKVFHSGLEIVMCGLDVTNRALLAADYLATLPTLNQTGKMLHALFSHYRSGSMSSGLRMHDLCAIAWLACPELFTLQPCFVAVETQGTWTAGTTVVDIEGRLGQPANALVALDIDVEGFQRWAAEVIALAP.

The active site involves histidine 233.

The protein belongs to the IUNH family. RihC subfamily.

Its function is as follows. Hydrolyzes both purine and pyrimidine ribonucleosides with a broad-substrate specificity. This chain is Non-specific ribonucleoside hydrolase RihC, found in Klebsiella pneumoniae (strain 342).